A 352-amino-acid polypeptide reads, in one-letter code: DNA-directed RNA polymerase subunit alpha (352 aa).

Residues 1–226 (MLISQRPTLT…ELFGLARELN (226 aa)) are alpha N-terminal domain (alpha-NTD). An alpha C-terminal domain (alpha-CTD) region spans residues 243–352 (HIASFGLPIE…EQDYAETEQL (110 aa)). The interval 324 to 352 (DASTGTWSDSGTFSDNDGGEQDYAETEQL) is disordered. Residues 326–338 (STGTWSDSGTFSD) are compositionally biased toward polar residues. Residues 340-352 (DGGEQDYAETEQL) show a composition bias toward acidic residues.

It belongs to the RNA polymerase alpha chain family. As to quaternary structure, homodimer. The RNAP catalytic core consists of 2 alpha, 1 beta, 1 beta' and 1 omega subunit. When a sigma factor is associated with the core the holoenzyme is formed, which can initiate transcription.

It catalyses the reaction RNA(n) + a ribonucleoside 5'-triphosphate = RNA(n+1) + diphosphate. DNA-dependent RNA polymerase catalyzes the transcription of DNA into RNA using the four ribonucleoside triphosphates as substrates. This chain is DNA-directed RNA polymerase subunit alpha, found in Nocardia farcinica (strain IFM 10152).